A 286-amino-acid chain; its full sequence is ATP synthase gamma chain (286 aa).

This sequence belongs to the ATPase gamma chain family. F-type ATPases have 2 components, CF(1) - the catalytic core - and CF(0) - the membrane proton channel. CF(1) has five subunits: alpha(3), beta(3), gamma(1), delta(1), epsilon(1). CF(0) has three main subunits: a, b and c.

It is found in the cell inner membrane. Functionally, produces ATP from ADP in the presence of a proton gradient across the membrane. The gamma chain is believed to be important in regulating ATPase activity and the flow of protons through the CF(0) complex. In Leptospira borgpetersenii serovar Hardjo-bovis (strain JB197), this protein is ATP synthase gamma chain.